The following is a 322-amino-acid chain: MLYRIPVSTVGYWHSPWQIHQFLLPIERFIHRNPMLQLDPISKTTHQHSGHKGLVMAIGGAEDKVRGRQILTTFCQRAGGLDAVIGVIPSASREPDAMGRLYHDIFRDIGVREVDILLVGDRADAEQEEMLARLSRCTGIFMSGGDQLRLSALLDETPLLYQLRHQVWEGKSILGGTSAGAAVLGECMIASGGSNEAPNRSLVDLATGLGILPDVLVDQHFHNRNRLARLISAISAHPDKLGVGIDEDTCAMFEADGTLRVLGRGSVTIVDPRDVSYTNYAHVDVNEPLSIYNLRLHILSDGDCYNLRTHQVQHKCILPPLN.

Catalysis depends on charge relay system residues Ser178, Glu196, and His220.

The protein belongs to the peptidase S51 family.

The catalysed reaction is [L-4-(L-arginin-2-N-yl)aspartate](n) + H2O = [L-4-(L-arginin-2-N-yl)aspartate](n-1) + L-4-(L-arginin-2-N-yl)aspartate. Functionally, exopeptidase that catalyzes the hydrolytic cleavage of multi-L-arginyl-poly-L-aspartic acid (cyanophycin; a water-insoluble reserve polymer) into aspartate-arginine dipeptides. This Synechococcus elongatus protein is Cyanophycinase (cphB).